A 124-amino-acid chain; its full sequence is Large ribosomal subunit protein bL12 (124 aa).

This sequence belongs to the bacterial ribosomal protein bL12 family. In terms of assembly, homodimer. Part of the ribosomal stalk of the 50S ribosomal subunit. Forms a multimeric L10(L12)X complex, where L10 forms an elongated spine to which 2 to 4 L12 dimers bind in a sequential fashion. Binds GTP-bound translation factors.

Its function is as follows. Forms part of the ribosomal stalk which helps the ribosome interact with GTP-bound translation factors. Is thus essential for accurate translation. This is Large ribosomal subunit protein bL12 from Borreliella afzelii (strain PKo) (Borrelia afzelii).